The primary structure comprises 417 residues: Imidazolonepropionase (417 aa).

2 residues coordinate Fe(3+): His-77 and His-79. Residues His-77 and His-79 each contribute to the Zn(2+) site. Positions 86, 149, and 182 each coordinate 4-imidazolone-5-propanoate. An N-formimidoyl-L-glutamate-binding site is contributed by Tyr-149. His-247 lines the Fe(3+) pocket. His-247 is a Zn(2+) binding site. Residue Gln-250 participates in 4-imidazolone-5-propanoate binding. A Fe(3+)-binding site is contributed by Asp-322. Asp-322 serves as a coordination point for Zn(2+). Positions 324 and 326 each coordinate N-formimidoyl-L-glutamate. Thr-327 lines the 4-imidazolone-5-propanoate pocket.

The protein belongs to the metallo-dependent hydrolases superfamily. HutI family. Zn(2+) serves as cofactor. It depends on Fe(3+) as a cofactor.

Its subcellular location is the cytoplasm. The enzyme catalyses 4-imidazolone-5-propanoate + H2O = N-formimidoyl-L-glutamate. It participates in amino-acid degradation; L-histidine degradation into L-glutamate; N-formimidoyl-L-glutamate from L-histidine: step 3/3. In terms of biological role, catalyzes the hydrolytic cleavage of the carbon-nitrogen bond in imidazolone-5-propanoate to yield N-formimidoyl-L-glutamate. It is the third step in the universal histidine degradation pathway. This Cupriavidus taiwanensis (strain DSM 17343 / BCRC 17206 / CCUG 44338 / CIP 107171 / LMG 19424 / R1) (Ralstonia taiwanensis (strain LMG 19424)) protein is Imidazolonepropionase.